The chain runs to 513 residues: MEKLEGYSEKQKSRQQYFVYPLLFQEYIYAFAHDYGLKGSEPVEIFGCNNKKFSSLLVKRLIIRMYQQNFRINSVNHPNQDRLLDHSNHFYSEFYSQILSEGFAIVLEIPFSLGELSCPEEKEIPKFQNLQSIHSIFPFLEDKFLHLHYLSHIEIPYPIHFEILVQLLEYRIQDVPSLHLLRFFLNYYSNWNSLITSMKSIFLLKKENKRLFRFLYNSYVSEYEFFLLFLRKQSSCLRLISSGTFLERIHFSMKMEHFGVMYPGFFRKTLWFFMDPLMHYVRYQGKAILASKGTLLLKKKWKSYLVNFSQYFLSFWTQPQRIRLNQLTNSCFDFLGYRSSVPINTFLVRNQMLENFFLIDTRMKKFDTTAPATPLIGSLSKAQFCTGLGHPISKPIWTDLSDWDILDRFGRICRNLFHYHSGSSKKQTLYQLKYILRLSCARTLARKHKSTVRTFMQRLGSVFLEEFFTEEEQVFSLMFAKTTHFSFHGSHSERIWYLDIIRIDDLVNPLILN.

Belongs to the intron maturase 2 family. MatK subfamily.

It is found in the plastid. The protein localises to the chloroplast. In terms of biological role, usually encoded in the trnK tRNA gene intron. Probably assists in splicing its own and other chloroplast group II introns. This Sporobolus michauxianus (Prairie cordgrass) protein is Maturase K.